Here is a 638-residue protein sequence, read N- to C-terminus: UvrABC system protein C (638 aa).

The GIY-YIG domain maps to 20 to 97 (ECAGVYQMFD…IKKFQPKFNI (78 aa)). The UVR domain maps to 209-244 (KELQENLSKKMEELSSHMYFEEAAEIRDRIKALSYV).

The protein belongs to the UvrC family. In terms of assembly, interacts with UvrB in an incision complex.

The protein resides in the cytoplasm. The UvrABC repair system catalyzes the recognition and processing of DNA lesions. UvrC both incises the 5' and 3' sides of the lesion. The N-terminal half is responsible for the 3' incision and the C-terminal half is responsible for the 5' incision. This is UvrABC system protein C from Rickettsia canadensis (strain McKiel).